A 300-amino-acid chain; its full sequence is Cytochrome f (300 aa).

Residues 1-32 (MMTYLSKQFSKLLFGQLLFLFIGNLLLKPVQA) form the signal peptide. Heme contacts are provided by Tyr33, Cys53, Cys56, and His57. A helical transmembrane segment spans residues 267–287 (LKTFIAFCVTVFIGQLAFVLK).

The protein belongs to the cytochrome f family. As to quaternary structure, the 4 large subunits of the cytochrome b6-f complex are cytochrome b6, subunit IV (17 kDa polypeptide, petD), cytochrome f and the Rieske protein, while the 4 small subunits are PetG, PetL, PetM and PetN. The complex functions as a dimer. Heme serves as cofactor.

The protein localises to the plastid. Its subcellular location is the chloroplast thylakoid membrane. Component of the cytochrome b6-f complex, which mediates electron transfer between photosystem II (PSII) and photosystem I (PSI), cyclic electron flow around PSI, and state transitions. The polypeptide is Cytochrome f (Cyanidioschyzon merolae (strain NIES-3377 / 10D) (Unicellular red alga)).